Reading from the N-terminus, the 114-residue chain is Cuticle protein AMP5 (114 aa).

Q1 is subject to Pyrrolidone carboxylic acid. The 66-residue stretch at 18-83 (AGNYFYEFET…VDSPLIPVAP (66 aa)) folds into the Chitin-binding type R&amp;R domain.

As to expression, arthrodial membrane.

In Homarus americanus (American lobster), this protein is Cuticle protein AMP5.